We begin with the raw amino-acid sequence, 311 residues long: Light-independent protochlorophyllide reductase iron-sulfur ATP-binding protein (311 aa).

ATP contacts are provided by residues 10 to 15 and Lys-39; that span reads GIGKST. Ser-14 lines the Mg(2+) pocket. Cys-95 and Cys-129 together coordinate [4Fe-4S] cluster. 180–181 serves as a coordination point for ATP; the sequence is NR.

It belongs to the NifH/BchL/ChlL family. In terms of assembly, homodimer. Protochlorophyllide reductase is composed of three subunits; ChlL, ChlN and ChlB. It depends on [4Fe-4S] cluster as a cofactor.

The protein localises to the plastid. It is found in the chloroplast. The enzyme catalyses chlorophyllide a + oxidized 2[4Fe-4S]-[ferredoxin] + 2 ADP + 2 phosphate = protochlorophyllide a + reduced 2[4Fe-4S]-[ferredoxin] + 2 ATP + 2 H2O. It functions in the pathway porphyrin-containing compound metabolism; chlorophyll biosynthesis (light-independent). Functionally, component of the dark-operative protochlorophyllide reductase (DPOR) that uses Mg-ATP and reduced ferredoxin to reduce ring D of protochlorophyllide (Pchlide) to form chlorophyllide a (Chlide). This reaction is light-independent. The L component serves as a unique electron donor to the NB-component of the complex, and binds Mg-ATP. This Oltmannsiellopsis viridis (Marine flagellate) protein is Light-independent protochlorophyllide reductase iron-sulfur ATP-binding protein.